The chain runs to 150 residues: Cytochrome c oxidase subunit 5A, mitochondrial (150 aa).

Residues 1-41 (MLGAALRRCAVAATTRADPRGLLHSARTPGPAVAIQSVRCY) constitute a mitochondrion transit peptide. The short motif at 2–17 (LGAALRRCAVAATTRA) is the SIFI-degron element. An N6-acetyllysine mark is found at Lys-87 and Lys-113. Thr-141 is modified (phosphothreonine).

The protein belongs to the cytochrome c oxidase subunit 5A family. As to quaternary structure, component of the cytochrome c oxidase (complex IV, CIV), a multisubunit enzyme composed of 14 subunits. The complex is composed of a catalytic core of 3 subunits MT-CO1, MT-CO2 and MT-CO3, encoded in the mitochondrial DNA, and 11 supernumerary subunits COX4I1 (or COX4I2), COX5A, COX5B, COX6A1 (or COX6A2), COX6B1 (or COX6B2), COX6C, COX7A2 (or COX7A1), COX7B, COX7C, COX8A and NDUFA4, which are encoded in the nuclear genome. The complex exists as a monomer or a dimer and forms supercomplexes (SCs) in the inner mitochondrial membrane with NADH-ubiquinone oxidoreductase (complex I, CI) and ubiquinol-cytochrome c oxidoreductase (cytochrome b-c1 complex, complex III, CIII), resulting in different assemblies (supercomplex SCI(1)III(2)IV(1) and megacomplex MCI(2)III(2)IV(2)). Interacts with AFG1L. Interacts with RAB5IF. Post-translationally, in response to mitochondrial stress, the precursor protein is ubiquitinated by the SIFI complex in the cytoplasm before mitochondrial import, leading to its degradation. Within the SIFI complex, UBR4 initiates ubiquitin chain that are further elongated or branched by KCMF1.

Its subcellular location is the mitochondrion inner membrane. Its pathway is energy metabolism; oxidative phosphorylation. Component of the cytochrome c oxidase, the last enzyme in the mitochondrial electron transport chain which drives oxidative phosphorylation. The respiratory chain contains 3 multisubunit complexes succinate dehydrogenase (complex II, CII), ubiquinol-cytochrome c oxidoreductase (cytochrome b-c1 complex, complex III, CIII) and cytochrome c oxidase (complex IV, CIV), that cooperate to transfer electrons derived from NADH and succinate to molecular oxygen, creating an electrochemical gradient over the inner membrane that drives transmembrane transport and the ATP synthase. Cytochrome c oxidase is the component of the respiratory chain that catalyzes the reduction of oxygen to water. Electrons originating from reduced cytochrome c in the intermembrane space (IMS) are transferred via the dinuclear copper A center (CU(A)) of subunit 2 and heme A of subunit 1 to the active site in subunit 1, a binuclear center (BNC) formed by heme A3 and copper B (CU(B)). The BNC reduces molecular oxygen to 2 water molecules using 4 electrons from cytochrome c in the IMS and 4 protons from the mitochondrial matrix. This Homo sapiens (Human) protein is Cytochrome c oxidase subunit 5A, mitochondrial (COX5A).